The sequence spans 322 residues: Beta-ketoacyl-[acyl-carrier-protein] synthase III (322 aa).

Catalysis depends on residues C113 and H249. Residues 250 to 254 (QANLR) are ACP-binding. N279 is a catalytic residue.

The protein belongs to the thiolase-like superfamily. FabH family. As to quaternary structure, homodimer.

The protein resides in the cytoplasm. It carries out the reaction malonyl-[ACP] + acetyl-CoA + H(+) = 3-oxobutanoyl-[ACP] + CO2 + CoA. It participates in lipid metabolism; fatty acid biosynthesis. Catalyzes the condensation reaction of fatty acid synthesis by the addition to an acyl acceptor of two carbons from malonyl-ACP. Catalyzes the first condensation reaction which initiates fatty acid synthesis and may therefore play a role in governing the total rate of fatty acid production. Possesses both acetoacetyl-ACP synthase and acetyl transacylase activities. Its substrate specificity determines the biosynthesis of branched-chain and/or straight-chain of fatty acids. This Granulibacter bethesdensis (strain ATCC BAA-1260 / CGDNIH1) protein is Beta-ketoacyl-[acyl-carrier-protein] synthase III.